Here is a 501-residue protein sequence, read N- to C-terminus: Acetylcholine receptor subunit beta (501 aa).

The first 23 residues, 1–23 (MALGALLLLLGVLGTPLAPGARG), serve as a signal peptide directing secretion. Over 24–244 (SEAEGQLIKK…VIFYLIIRRK (221 aa)) the chain is Extracellular. An intrachain disulfide couples Cys-151 to Cys-165. Asn-164 carries an N-linked (GlcNAc...) asparagine glycan. The next 3 membrane-spanning stretches (helical) occupy residues 245–269 (PLFY…VFYL), 277–295 (MGLS…LLLA), and 311–332 (YLMF…VLNL). Topologically, residues 333-469 (HHRSPHTHQM…WQFVAMVVDR (137 aa)) are cytoplasmic. Residues 362–382 (RPKPERDQLPEPHHSLSPRSG) are disordered. Basic and acidic residues predominate over residues 363-375 (PKPERDQLPEPHH). Tyr-390 carries the phosphotyrosine; by Tyr-kinases modification. Residues 470 to 488 (LFLWTFIVFTSVGTLVIFL) form a helical membrane-spanning segment.

This sequence belongs to the ligand-gated ion channel (TC 1.A.9) family. Acetylcholine receptor (TC 1.A.9.1) subfamily. Beta-1/CHRNB1 sub-subfamily. Pentamer of two alpha chains, and one each of the beta, delta, and gamma (in immature muscle) or epsilon (in mature muscle) chains. The muscle heteropentamer composed of alpha-1, beta-1, delta, epsilon subunits interacts with the alpha-conotoxin ImII.

It localises to the postsynaptic cell membrane. The protein localises to the cell membrane. It catalyses the reaction K(+)(in) = K(+)(out). The enzyme catalyses Na(+)(in) = Na(+)(out). After binding acetylcholine, the AChR responds by an extensive change in conformation that affects all subunits and leads to opening of an ion-conducting channel across the plasma membrane. This Mus musculus (Mouse) protein is Acetylcholine receptor subunit beta (Chrnb1).